Consider the following 56-residue polypeptide: Large ribosomal subunit protein bL32B (56 aa).

Over residues 1-19 (MAVPKRRMSRSNTRHRRAQ) the composition is skewed to basic residues. The tract at residues 1 to 22 (MAVPKRRMSRSNTRHRRAQWKA) is disordered.

Belongs to the bacterial ribosomal protein bL32 family.

The protein is Large ribosomal subunit protein bL32B (rpmF2) of Streptomyces coelicolor (strain ATCC BAA-471 / A3(2) / M145).